We begin with the raw amino-acid sequence, 126 residues long: MPDPAKSAPAPKKGSKKAVTKVQKKDGKKRKRSRKESYSVYVYKVLKQVHPDTGISSKAMGIMNSFVNDIFERIAGEASRLAHYNKRSTITSREIQTAVRLLLPGELAKHAVSEGTKAVTKYTSSK.

Residues 1–12 (MPDPAKSAPAPK) show a composition bias toward low complexity. Residues 1-36 (MPDPAKSAPAPKKGSKKAVTKVQKKDGKKRKRSRKE) are disordered. Position 2 is an N-acetylproline (Pro2). Lys6 bears the N6-(2-hydroxyisobutyryl)lysine; alternate mark. An N6-(beta-hydroxybutyryl)lysine; alternate modification is found at Lys6. Lys6 carries the N6-acetyllysine; alternate modification. Lys6 is subject to N6-butyryllysine; alternate. Lys6 is modified (N6-crotonyllysine; alternate). Lys6 is modified (N6-lactoyllysine; alternate). Lys6 participates in a covalent cross-link: Glycyl lysine isopeptide (Lys-Gly) (interchain with G-Cter in SUMO2); alternate. Ser7 is subject to ADP-ribosylserine. The residue at position 12 (Lys12) is an N6-(beta-hydroxybutyryl)lysine; alternate. Residues Lys12 and Lys13 each carry the N6-acetyllysine; alternate modification. Lys12 and Lys13 each carry N6-crotonyllysine; alternate. The residue at position 12 (Lys12) is an N6-lactoyllysine; alternate. Residue Lys13 is modified to N6-(2-hydroxyisobutyryl)lysine; alternate. Ser15 is subject to Phosphoserine; by STK4/MST1. Residues Lys16, Lys17, Lys21, and Lys24 each carry the N6-acetyllysine; alternate modification. N6-crotonyllysine; alternate occurs at positions 16, 17, 21, and 24. N6-lactoyllysine; alternate occurs at positions 16, 17, 21, and 24. Lys17 carries the N6-glutaryllysine; alternate modification. N6-(2-hydroxyisobutyryl)lysine; alternate is present on residues Lys21 and Lys24. An N6-(beta-hydroxybutyryl)lysine; alternate modification is found at Lys21. Lys21 carries the post-translational modification N6-butyryllysine; alternate. A Glycyl lysine isopeptide (Lys-Gly) (interchain with G-Cter in SUMO2); alternate cross-link involves residue Lys21. Lys25 carries the post-translational modification N6-(2-hydroxyisobutyryl)lysine. Position 35 is an N6-(2-hydroxyisobutyryl)lysine; alternate (Lys35). Lys35 carries the N6-(beta-hydroxybutyryl)lysine; alternate modification. Lys35 carries the post-translational modification N6-crotonyllysine; alternate. N6-glutaryllysine; alternate is present on Lys35. Position 35 is an N6-succinyllysine; alternate (Lys35). Residue Lys35 forms a Glycyl lysine isopeptide (Lys-Gly) (interchain with G-Cter in ubiquitin); alternate linkage. A PolyADP-ribosyl glutamic acid modification is found at Glu36. At Ser37 the chain carries Phosphoserine; by AMPK. N6-(2-hydroxyisobutyryl)lysine; alternate is present on residues Lys44, Lys47, and Lys58. Lys44 carries the N6-lactoyllysine; alternate modification. N6-glutaryllysine; alternate occurs at positions 44 and 47. At Lys47 the chain carries N6-methyllysine; alternate. At Lys58 the chain carries N6,N6-dimethyllysine; alternate. Arg80 bears the Dimethylated arginine mark. Position 86 is an N6-(2-hydroxyisobutyryl)lysine; alternate (Lys86). An N6-acetyllysine; alternate modification is found at Lys86. Lys86 is subject to N6-lactoyllysine; alternate. Residue Lys86 is modified to N6,N6,N6-trimethyllysine; alternate. Omega-N-methylarginine occurs at positions 87 and 93. Lys109 is modified (N6-(2-hydroxyisobutyryl)lysine; alternate). Lys109 is modified (N6-(beta-hydroxybutyryl)lysine; alternate). Lys109 bears the N6-lactoyllysine; alternate mark. Lys109 is modified (N6-glutaryllysine; alternate). Lys109 carries the N6-methyllysine; alternate modification. Ser113 carries O-linked (GlcNAc) serine glycosylation. Phosphothreonine is present on Thr116. 2 positions are modified to N6-(2-hydroxyisobutyryl)lysine; alternate: Lys117 and Lys121. Lys117 carries the N6-(beta-hydroxybutyryl)lysine; alternate modification. Residues Lys117 and Lys121 each carry the N6-lactoyllysine; alternate modification. An N6-glutaryllysine; alternate mark is found at Lys117 and Lys121. An N6-succinyllysine; alternate mark is found at Lys117 and Lys121. Lys117 carries the post-translational modification N6-methylated lysine; alternate. Residue Lys121 forms a Glycyl lysine isopeptide (Lys-Gly) (interchain with G-Cter in ubiquitin); alternate linkage.

The protein belongs to the histone H2B family. The nucleosome is a histone octamer containing two molecules each of H2A, H2B, H3 and H4 assembled in one H3-H4 heterotetramer and two H2A-H2B heterodimers. The octamer wraps approximately 147 bp of DNA. Monoubiquitination at Lys-35 (H2BK34Ub) by the MSL1/MSL2 dimer is required for histone H3 'Lys-4' (H3K4me) and 'Lys-79' (H3K79me) methylation and transcription activation at specific gene loci, such as HOXA9 and MEIS1 loci. Similarly, monoubiquitination at Lys-121 (H2BK120Ub) by the RNF20/40 complex gives a specific tag for epigenetic transcriptional activation and is also prerequisite for histone H3 'Lys-4' and 'Lys-79' methylation. It also functions cooperatively with the FACT dimer to stimulate elongation by RNA polymerase II. H2BK120Ub also acts as a regulator of mRNA splicing: deubiquitination by USP49 is required for efficient cotranscriptional splicing of a large set of exons. In terms of processing, phosphorylated on Ser-15 (H2BS14ph) by STK4/MST1 during apoptosis; which facilitates apoptotic chromatin condensation. Also phosphorylated on Ser-15 in response to DNA double strand breaks (DSBs), and in correlation with somatic hypermutation and immunoglobulin class-switch recombination. Phosphorylation at Ser-37 (H2BS36ph) by AMPK in response to stress promotes transcription. Post-translationally, glcNAcylation at Ser-113 promotes monoubiquitination of Lys-121. It fluctuates in response to extracellular glucose, and associates with transcribed genes. ADP-ribosylated by PARP1 or PARP2 on Ser-7 (H2BS6ADPr) in response to DNA damage. H2BS6ADPr promotes recruitment of CHD1L. Poly ADP-ribosylation on Glu-36 (H2BE35ADPr) by PARP1 regulates adipogenesis: it inhibits phosphorylation at Ser-37 (H2BS36ph), thereby blocking expression of pro-adipogenetic genes. In terms of processing, crotonylation (Kcr) is specifically present in male germ cells and marks testis-specific genes in post-meiotic cells, including X-linked genes that escape sex chromosome inactivation in haploid cells. Crotonylation marks active promoters and enhancers and confers resistance to transcriptional repressors. It is also associated with post-meiotically activated genes on autosomes. Post-translationally, hydroxybutyrylation of histones is induced by starvation. Lactylated in macrophages by EP300/P300 by using lactoyl-CoA directly derived from endogenous or exogenous lactate, leading to stimulates gene transcription.

It is found in the nucleus. Its subcellular location is the chromosome. Functionally, core component of nucleosome. Nucleosomes wrap and compact DNA into chromatin, limiting DNA accessibility to the cellular machineries which require DNA as a template. Histones thereby play a central role in transcription regulation, DNA repair, DNA replication and chromosomal stability. DNA accessibility is regulated via a complex set of post-translational modifications of histones, also called histone code, and nucleosome remodeling. In Mus musculus (Mouse), this protein is Histone H2B type 2-B.